Reading from the N-terminus, the 219-residue chain is Albonoursin synthase (219 aa).

Belongs to the nitroreductase family. Homomer. Requires FMN as cofactor. The N-terminus is blocked.

The protein localises to the cytoplasm. It carries out the reaction cyclo(L-phenylalanyl-L-leucyl) + 2 O2 = albonoursin + 2 H2O2. Functionally, involved in the biosynthesis of albonoursin (cyclo[(alpha,beta-dehydro-Phe)-(alpha,beta-dehydro-Leu)]), an antibacterial peptide. Catalyzes the formation of alpha,beta-dehydro-Phe (DPhe) and alpha,beta-dehydro-Leu (DLeu) residues during the biosynthesis of albonoursin. The catalytic reaction of cyclo(L-Phe-L-Leu) occurs in a two-step sequential alpha-beta-dehydrogenation leading first to cyclo(alpha,beta-dehydro-Phe-L-Leu) and finally to albonoursin. Can also use cyclo(L-Phe-L-His), cyclo(L-Trp-L-Trp), cyclo(L-Leu-L-Ala), cyclo(L-Phe-Gly), cyclo(L-Leu-Gly), cyclo(L-Ser-Gly) and cyclo(L-Glu-Gly) as substrate suggesting that the diketopiperazine ring is essential for the enzymatic reaction. This is Albonoursin synthase (albA) from Streptomyces noursei (Streptomyces albulus).